The chain runs to 327 residues: Phenylalanine--tRNA ligase alpha subunit (327 aa).

Glu-252 lines the Mg(2+) pocket.

It belongs to the class-II aminoacyl-tRNA synthetase family. Phe-tRNA synthetase alpha subunit type 1 subfamily. In terms of assembly, tetramer of two alpha and two beta subunits. Requires Mg(2+) as cofactor.

It is found in the cytoplasm. It carries out the reaction tRNA(Phe) + L-phenylalanine + ATP = L-phenylalanyl-tRNA(Phe) + AMP + diphosphate + H(+). The polypeptide is Phenylalanine--tRNA ligase alpha subunit (Salmonella newport (strain SL254)).